The chain runs to 104 residues: Small ribosomal subunit protein uS10 (104 aa).

It belongs to the universal ribosomal protein uS10 family. As to quaternary structure, part of the 30S ribosomal subunit.

In terms of biological role, involved in the binding of tRNA to the ribosomes. This is Small ribosomal subunit protein uS10 from Hydrogenobaculum sp. (strain Y04AAS1).